Reading from the N-terminus, the 714-residue chain is ATP-dependent DNA helicase DinG (714 aa).

The region spanning Ala17–Thr294 is the Helicase ATP-binding domain. Ala54 to Thr61 contributes to the ATP binding site. [4Fe-4S] cluster contacts are provided by Cys120, Cys194, Cys199, and Cys205. Positions Asp248–His251 match the DEAH box motif. Residues His517–Pro698 form the Helicase C-terminal domain.

This sequence belongs to the helicase family. DinG subfamily. Type 1 sub-subfamily. [4Fe-4S] cluster serves as cofactor.

It carries out the reaction Couples ATP hydrolysis with the unwinding of duplex DNA at the replication fork by translocating in the 5'-3' direction. This creates two antiparallel DNA single strands (ssDNA). The leading ssDNA polymer is the template for DNA polymerase III holoenzyme which synthesizes a continuous strand.. The catalysed reaction is ATP + H2O = ADP + phosphate + H(+). DNA-dependent ATPase and 5'-3' DNA helicase. Unwinds D-loops, R-loops, forked DNA and G-quadruplex DNA. This Salmonella typhimurium (strain LT2 / SGSC1412 / ATCC 700720) protein is ATP-dependent DNA helicase DinG.